Reading from the N-terminus, the 341-residue chain is tRNA N6-adenosine threonylcarbamoyltransferase (341 aa).

Residues His111 and His115 each coordinate Fe cation. Substrate is bound by residues 134 to 138 (LVSGG), Asp167, Gly180, and Asn276. Asp304 provides a ligand contact to Fe cation.

This sequence belongs to the KAE1 / TsaD family. The cofactor is Fe(2+).

The protein resides in the cytoplasm. It catalyses the reaction L-threonylcarbamoyladenylate + adenosine(37) in tRNA = N(6)-L-threonylcarbamoyladenosine(37) in tRNA + AMP + H(+). Its function is as follows. Required for the formation of a threonylcarbamoyl group on adenosine at position 37 (t(6)A37) in tRNAs that read codons beginning with adenine. Is involved in the transfer of the threonylcarbamoyl moiety of threonylcarbamoyl-AMP (TC-AMP) to the N6 group of A37, together with TsaE and TsaB. TsaD likely plays a direct catalytic role in this reaction. In Pseudomonas aeruginosa (strain LESB58), this protein is tRNA N6-adenosine threonylcarbamoyltransferase.